We begin with the raw amino-acid sequence, 416 residues long: MTYHPKSDFLRVMQERGYLADCTDMQALDEALSNGVVPAYIGYDATAASLHVGHLLNIMMLRWLQKTGHKPITLMGGGTTKVGDPSFRSEERPLLTPDRIDENIEGMRKVFARYLSYGEGATDALMLNNAEWLDQLNYLDFLRDIGRHFSVNRMLSFESVKSRLDREQSLSFLEFNYMILQAYDFLELFRRTGCRLQMGGSDQWGNIVNGIDLTRRVLEGEIFGLTSPLLTTSDGRKMGKSAGGAVWLNGEMLAPYDFWQFWRNTTDADVGRFLKLYTELPVEECDRLGALQGSEINAAKILLANEVTTLLHGRDAAEAAEATARAVFEEGGVGGALEVVELPAATLGDGLSVAHFLVAAGLVASGKEAKRLVAENGLRFNNEPVGDANAPVTAATVGEELKVSIGRKKHKLVRLS.

Tyrosine 40 lines the L-tyrosine pocket. The 'HIGH' region signature appears at 45–54 (ATAASLHVGH). Tyrosine 177 and glutamine 181 together coordinate L-tyrosine. The 'KMSKS' region signature appears at 237-241 (KMGKS). Position 240 (lysine 240) interacts with ATP. The region spanning 351 to 416 (LSVAHFLVAA…RKKHKLVRLS (66 aa)) is the S4 RNA-binding domain.

The protein belongs to the class-I aminoacyl-tRNA synthetase family. TyrS type 1 subfamily. Homodimer.

It localises to the cytoplasm. It carries out the reaction tRNA(Tyr) + L-tyrosine + ATP = L-tyrosyl-tRNA(Tyr) + AMP + diphosphate + H(+). Its function is as follows. Catalyzes the attachment of tyrosine to tRNA(Tyr) in a two-step reaction: tyrosine is first activated by ATP to form Tyr-AMP and then transferred to the acceptor end of tRNA(Tyr). This Cereibacter sphaeroides (strain ATCC 17029 / ATH 2.4.9) (Rhodobacter sphaeroides) protein is Tyrosine--tRNA ligase.